A 122-amino-acid polypeptide reads, in one-letter code: MKQLGKHIILELWGCENQALDDQPGIEKMLVDAVKACGATLICVKTHKFSPQGVTGVAVLSESHISIHTWPELGYAAMDVFTCGEHVAPHDTIPEIQKFLKPEKIDVMDIKRGIIEVDEVKE.

Ser-63 functions as the Schiff-base intermediate with substrate; via pyruvic acid in the catalytic mechanism. Ser-63 carries the pyruvic acid (Ser); by autocatalysis modification. Catalysis depends on His-68, which acts as the Proton acceptor; for processing activity. The active-site Proton donor; for catalytic activity is Cys-83.

This sequence belongs to the prokaryotic AdoMetDC family. Type 1 subfamily. In terms of assembly, heterotetramer of two alpha and two beta chains arranged as a dimer of alpha/beta heterodimers. It depends on pyruvate as a cofactor. Post-translationally, is synthesized initially as an inactive proenzyme. Formation of the active enzyme involves a self-maturation process in which the active site pyruvoyl group is generated from an internal serine residue via an autocatalytic post-translational modification. Two non-identical subunits are generated from the proenzyme in this reaction, and the pyruvate is formed at the N-terminus of the alpha chain, which is derived from the carboxyl end of the proenzyme. The post-translation cleavage follows an unusual pathway, termed non-hydrolytic serinolysis, in which the side chain hydroxyl group of the serine supplies its oxygen atom to form the C-terminus of the beta chain, while the remainder of the serine residue undergoes an oxidative deamination to produce ammonia and the pyruvoyl group blocking the N-terminus of the alpha chain.

The enzyme catalyses S-adenosyl-L-methionine + H(+) = S-adenosyl 3-(methylsulfanyl)propylamine + CO2. Its pathway is amine and polyamine biosynthesis; S-adenosylmethioninamine biosynthesis; S-adenosylmethioninamine from S-adenosyl-L-methionine: step 1/1. Catalyzes the decarboxylation of S-adenosylmethionine to S-adenosylmethioninamine (dcAdoMet), the propylamine donor required for the synthesis of the polyamines spermine and spermidine from the diamine putrescine. The sequence is that of S-adenosylmethionine decarboxylase proenzyme from Methanococcus maripaludis (strain C7 / ATCC BAA-1331).